Reading from the N-terminus, the 409-residue chain is Mitochondrial import inner membrane translocase subunit TIM50-B (409 aa).

The transit peptide at 1–42 directs the protein to the mitochondrion; sequence MSLIAIERVLCGWPKICRKLIVTSRSLTSGLRRALVKQPRKG. At 43–127 the chain is on the mitochondrial matrix side; that stretch reads GDVGKPGMEL…ELERAFRRMK (85 aa). A disordered region spans residues 93–114; it reads PQTSEESNDEESRERRKLEEEE. A compositionally biased stretch (basic and acidic residues) spans 102-111; the sequence is EESRERRKLE. Residues 128–148 form a helical membrane-spanning segment; sequence LGFGLFGIGSMLFSFWAIYFY. At 149–409 the chain is on the mitochondrial intermembrane side; sequence GRPSLDEHGN…KNWTRGFINH (261 aa). An FCP1 homology domain is found at 205-348; that stretch reads YVQPPYTLVL…FELTSFLSVL (144 aa).

It belongs to the TIM50 family. Component of the TIM23 complex at least composed of Tim23, Tim17 (Tim17a1, Tim17a2 or Tim17b1) and a Tim50. In terms of tissue distribution, exclusively expressed in the testis.

The protein resides in the mitochondrion inner membrane. Essential component of the TIM23 complex, a complex that mediates the translocation of transit peptide-containing proteins across the mitochondrial inner membrane. This is Mitochondrial import inner membrane translocase subunit TIM50-B (ttm2) from Drosophila melanogaster (Fruit fly).